The sequence spans 333 residues: Glycogenin-1 (333 aa).

T2 carries the N-acetylthreonine modification. 4 residues coordinate UDP: L9, T11, N12, and Y15. 4 residues coordinate UDP-alpha-D-glucose: L9, T11, N12, and Y15. S44 carries the post-translational modification Phosphoserine; by PKA; in vitro. R77 lines the UDP pocket. The UDP-alpha-D-glucose site is built by R77, K86, D102, A103, D104, N133, S134, D160, D163, and Q164. UDP-binding residues include D102, A103, and D104. D102 is a binding site for Mn(2+). D104 serves as a coordination point for Mn(2+). Y195 carries an O-linked (Glc...) tyrosine glycan. UDP contacts are provided by H212, G215, and K218. A Mn(2+)-binding site is contributed by H212. UDP-alpha-D-glucose is bound by residues G215 and K218. The tract at residues 284-316 (SHLSLGETPATTQPFVSSEERKERWEQGQADYM) is interaction with GYS1.

This sequence belongs to the glycosyltransferase 8 family. Glycogenin subfamily. In terms of assembly, part of the GYS1-GYG1 complex, a heterooctamer composed of a tetramer of GYS1 and 2 dimers of GYG1, where each GYS1 protomer binds to one GYG1 subunit (via GYG1 C-terminus); the GYS1 tetramer may dissociate from GYG1 dimers to continue glycogen polymerization on its own. May also form a heterooctamer complex with GYS2 (via GYG1 C-terminus). Mn(2+) is required as a cofactor. Post-translationally, self-glycosylated by the transfer of glucose residues from UDP-glucose to itself, forming an alpha-1,4-glycan of around 10 residues attached to Tyr-195. In terms of processing, phosphorylated. As to expression, detected in heart, skeletal muscle, brain and testis, and at lower levels in kidney.

Its subcellular location is the cytoplasm. The protein localises to the nucleus. It carries out the reaction L-tyrosyl-[glycogenin] + UDP-alpha-D-glucose = alpha-D-glucosyl-L-tyrosyl-[glycogenin] + UDP + H(+). The catalysed reaction is [1,4-alpha-D-glucosyl](n)-L-tyrosyl-[glycogenin] + UDP-alpha-D-glucose = [1,4-alpha-D-glucosyl](n+1)-L-tyrosyl-[glycogenin] + UDP + H(+). The protein operates within glycan biosynthesis; glycogen biosynthesis. Glycogenin participates in the glycogen biosynthetic process along with glycogen synthase and glycogen branching enzyme. It catalyzes the formation of a short alpha (1,4)-glucosyl chain covalently attached via a glucose 1-O-tyrosyl linkage to internal tyrosine residues and these chains act as primers for the elongation reaction catalyzed by glycogen synthase. The polypeptide is Glycogenin-1 (GYG1) (Oryctolagus cuniculus (Rabbit)).